Here is a 306-residue protein sequence, read N- to C-terminus: Bifunctional protein FolD 1 (306 aa).

Residues 170–172, Thr199, and Val240 each bind NADP(+); that span reads GRG. Residues 285–306 form a disordered region; the sequence is ARRTRSSRTPVRLPDSGAPAGR.

It belongs to the tetrahydrofolate dehydrogenase/cyclohydrolase family. Homodimer.

The catalysed reaction is (6R)-5,10-methylene-5,6,7,8-tetrahydrofolate + NADP(+) = (6R)-5,10-methenyltetrahydrofolate + NADPH. It catalyses the reaction (6R)-5,10-methenyltetrahydrofolate + H2O = (6R)-10-formyltetrahydrofolate + H(+). It participates in one-carbon metabolism; tetrahydrofolate interconversion. In terms of biological role, catalyzes the oxidation of 5,10-methylenetetrahydrofolate to 5,10-methenyltetrahydrofolate and then the hydrolysis of 5,10-methenyltetrahydrofolate to 10-formyltetrahydrofolate. The polypeptide is Bifunctional protein FolD 1 (Salinispora tropica (strain ATCC BAA-916 / DSM 44818 / JCM 13857 / NBRC 105044 / CNB-440)).